The primary structure comprises 354 residues: MEVNKASLTYDVPEDREYATKRILSLKRPSKIMVIGDVDTGKTTLIVYLANELISRGFKVAIVDADVGQKGILPPATISLALADMKFSSLSELKPLIHYFVGSITPSQFFGEMIVGTMRLSEIGKKFADYVLIDTTGMIYGSGVELKRLKIEAVKPDLILALEKKEELNPIVSGFEDKTIKLKVSENARSYSRSERRQIRQEKWRKYFENAKIVSFSLENVVVTGTSLFQGSDIREEEKSLLERLFKWVILHGRRIGDKYFVVKADVAEVPRVVDKNVVRYFDFEKLSNLLVGLLNEEGLCLGVGIIKGINFGEKRIDILTPVSEIENVREIRFGRIRVREDGEELGILDREAL.

36-43 (GDVDTGKT) is a binding site for ATP.

It depends on a divalent metal cation as a cofactor.

The catalysed reaction is a 5'-end dephospho-2'-deoxyribonucleoside-DNA + ATP = a 5'-end 5'-phospho-2'-deoxyribonucleoside-DNA + ADP + H(+). The enzyme catalyses a 5'-end dephospho-ribonucleoside-RNA + ATP = a 5'-end 5'-phospho-ribonucleoside-RNA + ADP + H(+). In terms of biological role, polynucleotide kinase that can phosphorylate the 5'-hydroxyl groups of both single-stranded RNA (ssRNA) and single-stranded DNA (ssDNA). Exhibits a strong preference for ssRNA. This is Polyribonucleotide 5'-hydroxyl-kinase PF0112 from Pyrococcus furiosus (strain ATCC 43587 / DSM 3638 / JCM 8422 / Vc1).